The primary structure comprises 311 residues: Porphobilinogen deaminase (311 aa).

Cysteine 241 is modified (S-(dipyrrolylmethanemethyl)cysteine).

It belongs to the HMBS family. Monomer. Dipyrromethane serves as cofactor.

The enzyme catalyses 4 porphobilinogen + H2O = hydroxymethylbilane + 4 NH4(+). Its pathway is porphyrin-containing compound metabolism; protoporphyrin-IX biosynthesis; coproporphyrinogen-III from 5-aminolevulinate: step 2/4. Tetrapolymerization of the monopyrrole PBG into the hydroxymethylbilane pre-uroporphyrinogen in several discrete steps. This Bacillus pumilus (strain SAFR-032) protein is Porphobilinogen deaminase.